Reading from the N-terminus, the 529-residue chain is Delayed-rectifier potassium channel regulatory subunit KCNS1 (529 aa).

Residues methionine 1–leucine 217 are Cytoplasmic-facing. The helical transmembrane segment at proline 218–isoleucine 239 threads the bilayer. Topologically, residues histidine 240–proline 270 are extracellular. Residues valine 271–leucine 293 form a helical membrane-spanning segment. The Cytoplasmic segment spans residues alanine 294–proline 304. The chain crosses the membrane as a helical span at residues leucine 305–alanine 322. The Extracellular segment spans residues serine 323–leucine 342. A helical; Voltage-sensor membrane pass occupies residues glycine 343 to histidine 363. Residues serine 364–tyrosine 378 are Cytoplasmic-facing. The helical transmembrane segment at arginine 379 to tyrosine 400 threads the bilayer. Residues threonine 401–isoleucine 413 lie on the Extracellular side of the membrane. Residues proline 414–threonine 425 constitute an intramembrane region (helical). Positions threonine 426 to aspartate 431 match the Selectivity filter motif. Residues threonine 426 to valine 433 lie within the membrane without spanning it. Over proline 434–lysine 440 the chain is Extracellular. A helical transmembrane segment spans residues leucine 441 to tyrosine 469. Topologically, residues glutamine 470–tyrosine 529 are cytoplasmic. Residues serine 498 to tyrosine 529 form a disordered region. A compositionally biased stretch (basic and acidic residues) spans threonine 504–aspartate 516.

The protein belongs to the potassium channel family. S (TC 1.A.1.2) subfamily. Kv9.1/KCNS1 sub-subfamily. As to quaternary structure, heterotetramer with KCNB1. Heterotetramer with KCNB2. Does not form homomultimers.

It localises to the cell membrane. In terms of biological role, potassium channel regulatory subunit that modulate the delayed rectifier voltage-gated potassium channel activity of KCNB1 and KCNB2 by altering their kinetics, expression levels, and shifting the half-inactivation potential to more polarized values. While it does not form functional channels on its own, it can form functional heterotetrameric channels with KCNB1 and KCNB2. Each regulatory subunit has unique regulatory properties that can lead to extensive inhibition, significant changes in kinetics, and/or substantial shifts in the voltage dependencies of the inactivation process. The chain is Delayed-rectifier potassium channel regulatory subunit KCNS1 from Lemur catta (Ring-tailed lemur).